Here is a 124-residue protein sequence, read N- to C-terminus: MNVLAKYNQVRSSAQKIRLIANIIRGKKALLALQILSSVKKKAALLVKKLLKSALSNAEHNYGYNKEVLIISKIFVNSGSSMKRMMPRAKGRADRILKRTSHITVILSDIKKNPEGYNGSKSTP.

This sequence belongs to the universal ribosomal protein uL22 family. Part of the 50S ribosomal subunit.

In terms of biological role, this protein binds specifically to 23S rRNA; its binding is stimulated by other ribosomal proteins, e.g. L4, L17, and L20. It is important during the early stages of 50S assembly. It makes multiple contacts with different domains of the 23S rRNA in the assembled 50S subunit and ribosome. Its function is as follows. The globular domain of the protein is located near the polypeptide exit tunnel on the outside of the subunit, while an extended beta-hairpin is found that lines the wall of the exit tunnel in the center of the 70S ribosome. The chain is Large ribosomal subunit protein uL22 from Buchnera aphidicola subsp. Cinara cedri (strain Cc).